A 551-amino-acid chain; its full sequence is Thermophilic beta-amylase (551 aa).

The N-terminal stretch at 1–32 is a signal peptide; sequence MIGAFKRLGQKLFLTLLTASLIFASSIVTANA. Residue Asp-73 coordinates substrate. Glu-80 serves as a coordination point for Ca(2+). His-113 and Asp-121 together coordinate substrate. Ca(2+) is bound at residue Glu-167. Glu-195 functions as the Proton donor in the catalytic mechanism. Lys-310, His-315, and Thr-353 together coordinate substrate. The active-site Proton acceptor is the Glu-392. Residues 393–394 and Arg-423 contribute to the substrate site; that span reads NA. Residues 448–551 form the CBM20 domain; that stretch reads LTPNGTIPVT…TGSVTITWQN (104 aa).

Belongs to the glycosyl hydrolase 14 family. As to quaternary structure, monomer. Requires Ca(2+) as cofactor.

The enzyme catalyses Hydrolysis of (1-&gt;4)-alpha-D-glucosidic linkages in polysaccharides so as to remove successive maltose units from the non-reducing ends of the chains.. The sequence is that of Thermophilic beta-amylase from Thermoanaerobacterium thermosulfurigenes (Clostridium thermosulfurogenes).